The primary structure comprises 37 residues: Cytochrome b6-f complex subunit 5 (37 aa).

The helical transmembrane segment at 5-25 threads the bilayer; that stretch reads LPSGIVLGLIPITLAGLFVTA.

This sequence belongs to the PetG family. As to quaternary structure, the 4 large subunits of the cytochrome b6-f complex are cytochrome b6, subunit IV (17 kDa polypeptide, PetD), cytochrome f and the Rieske protein, while the 4 small subunits are PetG, PetL, PetM and PetN. The complex functions as a dimer.

Its subcellular location is the plastid. The protein localises to the chloroplast thylakoid membrane. Component of the cytochrome b6-f complex, which mediates electron transfer between photosystem II (PSII) and photosystem I (PSI), cyclic electron flow around PSI, and state transitions. PetG is required for either the stability or assembly of the cytochrome b6-f complex. This is Cytochrome b6-f complex subunit 5 from Pinus thunbergii (Japanese black pine).